The sequence spans 1242 residues: ATP-dependent helicase/nuclease subunit A (1242 aa).

One can recognise a UvrD-like helicase ATP-binding domain in the interval 13-486 (SQWTDDQWKA…IDLAKNFRSR (474 aa)). Residue 34 to 41 (AAAGSGKT) coordinates ATP. One can recognise a UvrD-like helicase C-terminal domain in the interval 506–806 (GEIEYDADAE…RIMTIHKSKG (301 aa)).

Belongs to the helicase family. AddA subfamily. In terms of assembly, heterodimer of AddA and AddB/RexB. Mg(2+) is required as a cofactor.

It carries out the reaction Couples ATP hydrolysis with the unwinding of duplex DNA by translocating in the 3'-5' direction.. The enzyme catalyses ATP + H2O = ADP + phosphate + H(+). Its function is as follows. The heterodimer acts as both an ATP-dependent DNA helicase and an ATP-dependent, dual-direction single-stranded exonuclease. Recognizes the chi site generating a DNA molecule suitable for the initiation of homologous recombination. The AddA nuclease domain is required for chi fragment generation; this subunit has the helicase and 3' -&gt; 5' nuclease activities. This chain is ATP-dependent helicase/nuclease subunit A, found in Bacillus cytotoxicus (strain DSM 22905 / CIP 110041 / 391-98 / NVH 391-98).